We begin with the raw amino-acid sequence, 141 residues long: Nucleoside diphosphate kinase (141 aa).

ATP contacts are provided by Lys-11, Phe-59, Arg-87, Thr-93, Arg-104, and Asn-114. His-117 functions as the Pros-phosphohistidine intermediate in the catalytic mechanism.

The protein belongs to the NDK family. As to quaternary structure, homotetramer. The cofactor is Mg(2+).

The protein localises to the cytoplasm. The catalysed reaction is a 2'-deoxyribonucleoside 5'-diphosphate + ATP = a 2'-deoxyribonucleoside 5'-triphosphate + ADP. The enzyme catalyses a ribonucleoside 5'-diphosphate + ATP = a ribonucleoside 5'-triphosphate + ADP. In terms of biological role, major role in the synthesis of nucleoside triphosphates other than ATP. The ATP gamma phosphate is transferred to the NDP beta phosphate via a ping-pong mechanism, using a phosphorylated active-site intermediate. The sequence is that of Nucleoside diphosphate kinase from Cupriavidus necator (strain ATCC 17699 / DSM 428 / KCTC 22496 / NCIMB 10442 / H16 / Stanier 337) (Ralstonia eutropha).